Reading from the N-terminus, the 535-residue chain is Ribonuclease Y (535 aa).

Residues Ile-4–Ile-24 form a helical membrane-spanning segment. The tract at residues Glu-118–Ile-141 is disordered. A KH domain is found at Thr-225–Leu-285. Residues Val-351 to Ala-444 form the HD domain.

The protein belongs to the RNase Y family.

The protein resides in the cell membrane. In terms of biological role, endoribonuclease that initiates mRNA decay. This chain is Ribonuclease Y, found in Streptococcus pyogenes serotype M2 (strain MGAS10270).